A 351-amino-acid polypeptide reads, in one-letter code: MPGATEKGSELSERIESFVEALKRGGGQRSSEDMARETLGLLRRIITDHRWSNAGELMELIRREGRRMMAAQPSETTVGNMVRRVLKIIREEYGRLHGRSDESDQQESLHKLLTSGGLSEDFSFHYAQLQSNIVEAINELLVELEGTTENIAAQALEHIHSNEVIMTIGLSRTVEAFLREAARKRKFHVIVAECAPFCQGHEMAVNLSKAGIETTVMTDAAIFAVMSRVNKVIIGTKTILANGALRAVTGTHTLALAAKHHSTPLIVCAPMFKLSPQFPNEEDSFHKFVAPEEVLPFTEGDILDKVGCHCPVFDYVPPELITLFISNIGGNAPSYIYRLMSELYHPEDHVL.

Belongs to the eIF-2B alpha/beta/delta subunits family. In terms of assembly, component of the translation initiation factor 2B (eIF2B) complex which is a heterodecamer of two sets of five different subunits: alpha, beta, gamma, delta and epsilon. Subunits alpha, beta and delta comprise a regulatory subcomplex and subunits epsilon and gamma comprise a catalytic subcomplex. Within the complex, the hexameric regulatory complex resides at the center, with the two heterodimeric catalytic subcomplexes bound on opposite sides.

The protein resides in the cytoplasm. The protein localises to the cytosol. With respect to regulation, activated by the chemical integrated stress response (ISR) inhibitor ISRIB which stimulates guanine nucleotide exchange factor activity for both phosphorylated and unphosphorylated eIF2. Functionally, acts as a component of the translation initiation factor 2B (eIF2B) complex, which catalyzes the exchange of GDP for GTP on eukaryotic initiation factor 2 (eIF2) gamma subunit. Its guanine nucleotide exchange factor activity is repressed when bound to eIF2 complex phosphorylated on the alpha subunit, thereby limiting the amount of methionyl-initiator methionine tRNA available to the ribosome and consequently global translation is repressed. This chain is Translation initiation factor eIF2B subunit beta (EIF2B2), found in Oryctolagus cuniculus (Rabbit).